The chain runs to 204 residues: Ribosomal RNA large subunit methyltransferase E (204 aa).

G49, W51, D69, N87, and D111 together coordinate S-adenosyl-L-methionine. K151 serves as the catalytic Proton acceptor.

This sequence belongs to the class I-like SAM-binding methyltransferase superfamily. RNA methyltransferase RlmE family.

It is found in the cytoplasm. It carries out the reaction uridine(2552) in 23S rRNA + S-adenosyl-L-methionine = 2'-O-methyluridine(2552) in 23S rRNA + S-adenosyl-L-homocysteine + H(+). Its function is as follows. Specifically methylates the uridine in position 2552 of 23S rRNA at the 2'-O position of the ribose in the fully assembled 50S ribosomal subunit. In Nitratidesulfovibrio vulgaris (strain ATCC 29579 / DSM 644 / CCUG 34227 / NCIMB 8303 / VKM B-1760 / Hildenborough) (Desulfovibrio vulgaris), this protein is Ribosomal RNA large subunit methyltransferase E.